The sequence spans 331 residues: Germ cell-specific gene 1-like protein (331 aa).

At 1–8 (MKTSRRGR) the chain is on the cytoplasmic side. The helical transmembrane segment at 9–29 (ALLAVALNLLALLFATTAFLT) threads the bilayer. Residues 30–132 (THWCQGTQRV…FIDLAPASEK (103 aa)) lie on the Extracellular side of the membrane. A helical transmembrane segment spans residues 133-153 (GVLWLSVVSEVLYILLLVVGF). Residues 154-173 (SLMCLELFHSSNVIDGLKLN) are Cytoplasmic-facing. Residues 174-194 (AFAAVFTVLSGLLGMVAHMMY) traverse the membrane as a helical segment. Topologically, residues 195 to 217 (TQVFQVTVSLGPEDWRPHSWDYG) are extracellular. A helical membrane pass occupies residues 218–238 (WSFCLAWGSFTCCMAASVTTL). The Cytoplasmic portion of the chain corresponds to 239-331 (NSYTKTVIEF…RQCWVLGHWV (93 aa)).

Belongs to the GSG1 family. In terms of assembly, component of the inner core of AMPAR complex. AMPAR complex consists of an inner core made of 4 pore-forming GluA/GRIA proteins (GRIA1, GRIA2, GRIA3 and GRIA4) and 4 major auxiliary subunits arranged in a twofold symmetry. One of the two pairs of distinct binding sites is occupied either by CNIH2, CNIH3 or CACNG2, CACNG3. The other harbors CACNG2, CACNG3, CACNG4, CACNG8 or GSG1L. This inner core of AMPAR complex is complemented by outer core constituents binding directly to the GluA/GRIA proteins at sites distinct from the interaction sites of the inner core constituents. Outer core constituents include at least PRRT1, PRRT2, CKAMP44/SHISA9, FRRS1L and NRN1. The proteins of the inner and outer core serve as a platform for other, more peripherally associated AMPAR constituents. Alone or in combination, these auxiliary subunits control the gating and pharmacology of the AMPAR complex and profoundly impact their biogenesis and protein processing.

The protein resides in the cell membrane. It localises to the synapse. In terms of biological role, as a component of the inner core of AMPAR complex, modifies AMPA receptor (AMPAR) gating. The chain is Germ cell-specific gene 1-like protein (GSG1L) from Homo sapiens (Human).